The chain runs to 347 residues: GMP reductase (347 aa).

NADP(+) is bound at residue 108-131; that stretch reads ADFEKTVQILALNPALNFVCIDVA. 2 residues coordinate K(+): Gly-181 and Gly-183. The active-site Thioimidate intermediate is Cys-186. 216–239 serves as a coordination point for NADP(+); it reads IVSDGGCTMPGDVAKAFGGGADFV.

Belongs to the IMPDH/GMPR family. GuaC type 1 subfamily. Homotetramer.

The catalysed reaction is IMP + NH4(+) + NADP(+) = GMP + NADPH + 2 H(+). In terms of biological role, catalyzes the irreversible NADPH-dependent deamination of GMP to IMP. It functions in the conversion of nucleobase, nucleoside and nucleotide derivatives of G to A nucleotides, and in maintaining the intracellular balance of A and G nucleotides. This chain is GMP reductase, found in Salmonella typhi.